We begin with the raw amino-acid sequence, 507 residues long: Cytochrome P450 monooxygenase cloA (507 aa).

The helical transmembrane segment at Trp-15–Ile-35 threads the bilayer. Residue Asn-247 is glycosylated (N-linked (GlcNAc...) asparagine). Cys-450 provides a ligand contact to heme.

Belongs to the cytochrome P450 family. It depends on heme as a cofactor.

The protein localises to the membrane. Its pathway is alkaloid biosynthesis; ergot alkaloid biosynthesis. Its function is as follows. Cytochrome P450 monooxygenase; part of the gene cluster that mediates the biosynthesis of fungal ergot alkaloid. DmaW catalyzes the first step of ergot alkaloid biosynthesis by condensing dimethylallyl diphosphate (DMAP) and tryptophan to form 4-dimethylallyl-L-tryptophan. The second step is catalyzed by the methyltransferase easF that methylates 4-dimethylallyl-L-tryptophan in the presence of S-adenosyl-L-methionine, resulting in the formation of 4-dimethylallyl-L-abrine. The catalase easC and the FAD-dependent oxidoreductase easE then transform 4-dimethylallyl-L-abrine to chanoclavine-I which is further oxidized by easD in the presence of NAD(+), resulting in the formation of chanoclavine-I aldehyde. Agroclavine dehydrogenase easG then mediates the conversion of chanoclavine-I aldehyde to agroclavine via a non-enzymatic adduct reaction: the substrate is an iminium intermediate that is formed spontaneously from chanoclavine-I aldehyde in the presence of glutathione. The presence of easA is not required to complete this reaction. Further conversion of agroclavine to paspalic acid is a two-step process involving oxidation of agroclavine to elymoclavine and of elymoclavine to paspalic acid, the second step being performed by the elymoclavine oxidase cloA. Paspalic acid is then further converted to D-lysergic acid. Ergopeptines are assembled from D-lysergic acid and three different amino acids by the D-lysergyl-peptide-synthetases composed each of a monomudular and a trimodular nonribosomal peptide synthetase subunit. LpsB and lpsC encode the monomodular subunits responsible for D-lysergic acid activation and incorporation into the ergopeptine backbone. LpsA1 and A2 subunits encode the trimodular nonribosomal peptide synthetase assembling the tripeptide portion of ergopeptines. LpsA1 is responsible for formation of the major ergopeptine, ergotamine, and lpsA2 for alpha-ergocryptine, the minor ergopeptine of the total alkaloid mixture elaborated by C.purpurea. D-lysergyl-tripeptides are assembled by the nonribosomal peptide synthetases and released as N-(D-lysergyl-aminoacyl)-lactams. Cyclolization of the D-lysergyl-tripeptides is performed by the Fe(2+)/2-ketoglutarate-dependent dioxygenase easH which introduces a hydroxyl group into N-(D-lysergyl-aminoacyl)-lactam at alpha-C of the aminoacyl residue followed by spontaneous condensation with the terminal lactam carbonyl group. This chain is Cytochrome P450 monooxygenase cloA, found in Claviceps purpurea (strain 20.1) (Ergot fungus).